We begin with the raw amino-acid sequence, 180 residues long: UPF0227 protein Shew_1627 (180 aa).

This sequence belongs to the UPF0227 family.

The protein is UPF0227 protein Shew_1627 of Shewanella loihica (strain ATCC BAA-1088 / PV-4).